We begin with the raw amino-acid sequence, 648 residues long: SRSF protein kinase 1 (648 aa).

The segment at 1-57 (MERKVLALQARKKRTKAKKDKAQRKPETQHRGSAPHSESDIPEQEEEILGSDDDEQE) is disordered. Positions 10–22 (ARKKRTKAKKDKA) are enriched in basic residues. Residues 40–57 (DIPEQEEEILGSDDDEQE) are compositionally biased toward acidic residues. Residue Ser-51 is modified to Phosphoserine. Positions 80–646 (YHVIRKLGWG…AAECLRHPWL (567 aa)) constitute a Protein kinase domain. ATP contacts are provided by residues 86–94 (LGWGHFSTV) and Lys-109. The Proton acceptor role is filled by Asp-213. Disordered stretches follow at residues 238–354 (WQRS…APEI) and 395–464 (PSFL…DSKG). The span at 265–276 (KNKKKKLKKKQK) shows a compositional bias: basic residues. Composition is skewed to basic and acidic residues over residues 277-288 (RQAELLEKRMQE) and 304-317 (NKQEESESPVDRPL). Residues Ser-309, Ser-311, and Ser-333 each carry the phosphoserine modification. Composition is skewed to polar residues over residues 333 to 343 (SNSIGQDQTLT) and 396 to 441 (SFLN…TQLE). The residue at position 448 (Thr-448) is a Phosphothreonine. The residue at position 450 (Ser-450) is a Phosphoserine. A Phosphoserine; by CK2 modification is found at Ser-548.

The protein belongs to the protein kinase superfamily. CMGC Ser/Thr protein kinase family. In terms of assembly, monomer. Found in a multisubunit complex containing seven proteins, named toposome, which separates entangled circular chromatin DNA during chromosome segregation. Interacts with HHV-1 ICP27 protein. Interacts with DNAJC8 and AHSA1/AHA1 and this mediates formation of a complex with the Hsp70 /Hsp90 machinery. Binds to IGF2BP1, SYNCRIP, HNRNPA2B1 and HNRNPC. Interacts with SAFB/SAFB1 and SAFB2 which inhibits its activity. Mg(2+) serves as cofactor. As to expression, predominantly expressed in the testis but is also present at lower levels in heart, spleen, liver, brain, kidney, lung and skeletal muscle. Present in all germinal cells in the seminiferous tubules but not in mature spermatozoa.

It is found in the cytoplasm. The protein resides in the nucleus. Its subcellular location is the nucleoplasm. It localises to the nucleus matrix. The protein localises to the microsome. It is found in the nucleus speckle. The protein resides in the chromosome. The catalysed reaction is L-seryl-[protein] + ATP = O-phospho-L-seryl-[protein] + ADP + H(+). It catalyses the reaction L-threonyl-[protein] + ATP = O-phospho-L-threonyl-[protein] + ADP + H(+). Activated by phosphorylation on Ser-51 and Ser-548. Its function is as follows. Serine/arginine-rich protein-specific kinase which specifically phosphorylates its substrates at serine residues located in regions rich in arginine/serine dipeptides, known as RS domains and is involved in the phosphorylation of SR splicing factors and the regulation of splicing. Plays a central role in the regulatory network for splicing, controlling the intranuclear distribution of splicing factors in interphase cells and the reorganization of nuclear speckles during mitosis. Can influence additional steps of mRNA maturation, as well as other cellular activities, such as chromatin reorganization in somatic and sperm cells and cell cycle progression. Phosphorylates SFRS2, ZRSR2, LBR and PRM1. Phosphorylates SRSF1 using a directional (C-terminal to N-terminal) and a dual-track mechanism incorporating both processive phosphorylation (in which the kinase stays attached to the substrate after each round of phosphorylation) and distributive phosphorylation steps (in which the kinase and substrate dissociate after each phosphorylation event). The RS domain of SRSF1 binds first to a docking groove in the large lobe of the kinase domain of SRPK1. This induces certain structural changes in SRPK1 and/or RRM2 domain of SRSF1, allowing RRM2 to bind the kinase and initiate phosphorylation. The cycles continue for several phosphorylation steps in a processive manner (steps 1-8) until the last few phosphorylation steps (approximately steps 9-12). During that time, a mechanical stress induces the unfolding of the beta-4 motif in RRM2, which then docks at the docking groove of SRPK1. This also signals RRM2 to begin to dissociate, which facilitates SRSF1 dissociation after phosphorylation is completed. Can mediate hepatitis B virus (HBV) core protein phosphorylation. It plays a negative role in the regulation of HBV replication through a mechanism not involving the phosphorylation of the core protein but by reducing the packaging efficiency of the pregenomic RNA (pgRNA) without affecting the formation of the viral core particles. Can induce splicing of exon 10 in MAPT/TAU. This is SRSF protein kinase 1 from Mus musculus (Mouse).